The sequence spans 247 residues: MGKRDNRVAYMNPIAMARSRGPIQSSGPTIQDYLNRPRPTWEEVKEQLEKKKKGSKALAEFEEKMNENWKKELEKHREKLLSGSESSSKKRQRKKKEKKKSGRYSSSSSSSSDSSSSSSDSEDEDKKQGKRRKKKKNRSHKSSESSMSETESDSKDSLKKKKKSKDGTEKEKDIKGLSKKRKMYSEDKPLSSESLSESEYIEEVRAKKKKSSEEREKATEKTKKKKKHKKHSKKKKKKAASSSPDSP.

Disordered regions lie at residues 19–38 and 70–247; these read SRGP…NRPR and KKEL…PDSP. Positions 70–80 are enriched in basic and acidic residues; it reads KKELEKHREKL. S82 is modified (phosphoserine). Residues 89 to 102 are compositionally biased toward basic residues; that stretch reads KKRQRKKKEKKKSG. Residues 103–119 are compositionally biased toward low complexity; that stretch reads RYSSSSSSSSDSSSSSS. Positions 128 to 140 are enriched in basic residues; it reads QGKRRKKKKNRSH. A compositionally biased stretch (basic and acidic residues) spans 165–176; it reads KDGTEKEKDIKG. Residues S191, S192, S194, and S196 each carry the phosphoserine modification. Positions 211–221 are enriched in basic and acidic residues; the sequence is SSEEREKATEK. Residues 222 to 239 show a composition bias toward basic residues; sequence TKKKKKHKKHSKKKKKKA.

It belongs to the FAM133 family.

This is Protein FAM133B (FAM133B) from Homo sapiens (Human).